The chain runs to 283 residues: Formamidopyrimidine-DNA glycosylase (283 aa).

Pro-2 acts as the Schiff-base intermediate with DNA in catalysis. The Proton donor role is filled by Glu-3. Lys-58 acts as the Proton donor; for beta-elimination activity in catalysis. Residues His-100, Arg-119, and Arg-162 each coordinate DNA. The FPG-type zinc-finger motif lies at 247–283 (DVYGREGEPCRRAGCDGTVQRITQSGRSSFYCAQCQR). The Proton donor; for delta-elimination activity role is filled by Arg-273.

This sequence belongs to the FPG family. Monomer. Zn(2+) is required as a cofactor.

The enzyme catalyses Hydrolysis of DNA containing ring-opened 7-methylguanine residues, releasing 2,6-diamino-4-hydroxy-5-(N-methyl)formamidopyrimidine.. It catalyses the reaction 2'-deoxyribonucleotide-(2'-deoxyribose 5'-phosphate)-2'-deoxyribonucleotide-DNA = a 3'-end 2'-deoxyribonucleotide-(2,3-dehydro-2,3-deoxyribose 5'-phosphate)-DNA + a 5'-end 5'-phospho-2'-deoxyribonucleoside-DNA + H(+). In terms of biological role, involved in base excision repair of DNA damaged by oxidation or by mutagenic agents. Acts as a DNA glycosylase that recognizes and removes damaged bases. Has a preference for oxidized purines, such as 7,8-dihydro-8-oxoguanine (8-oxoG). Has AP (apurinic/apyrimidinic) lyase activity and introduces nicks in the DNA strand. Cleaves the DNA backbone by beta-delta elimination to generate a single-strand break at the site of the removed base with both 3'- and 5'-phosphates. In Ruegeria pomeroyi (strain ATCC 700808 / DSM 15171 / DSS-3) (Silicibacter pomeroyi), this protein is Formamidopyrimidine-DNA glycosylase.